The primary structure comprises 228 residues: Urease subunit gamma/beta (228 aa).

The tract at residues 1-101 is urease gamma; it reads MQLTERERDK…LVTVHDPIRG (101 aa). The tract at residues 102-228 is urease beta; that stretch reads AASRRVAGEY…ARAAGFGGAQ (127 aa).

The protein in the N-terminal section; belongs to the urease gamma subunit family. This sequence in the C-terminal section; belongs to the urease beta subunit family. Heterohexamer of 3 UreC (alpha) and 3 UreAB (gamma/beta) subunits.

Its subcellular location is the cytoplasm. It catalyses the reaction urea + 2 H2O + H(+) = hydrogencarbonate + 2 NH4(+). The protein operates within nitrogen metabolism; urea degradation; CO(2) and NH(3) from urea (urease route): step 1/1. The chain is Urease subunit gamma/beta from Deinococcus radiodurans (strain ATCC 13939 / DSM 20539 / JCM 16871 / CCUG 27074 / LMG 4051 / NBRC 15346 / NCIMB 9279 / VKM B-1422 / R1).